The following is a 242-amino-acid chain: tRNA (guanine-N(1)-)-methyltransferase (242 aa).

S-adenosyl-L-methionine is bound by residues Gly-108 and 127–132 (IGDYVL).

The protein belongs to the RNA methyltransferase TrmD family. In terms of assembly, homodimer.

The protein localises to the cytoplasm. The catalysed reaction is guanosine(37) in tRNA + S-adenosyl-L-methionine = N(1)-methylguanosine(37) in tRNA + S-adenosyl-L-homocysteine + H(+). Specifically methylates guanosine-37 in various tRNAs. This is tRNA (guanine-N(1)-)-methyltransferase from Lactobacillus acidophilus (strain ATCC 700396 / NCK56 / N2 / NCFM).